A 243-amino-acid polypeptide reads, in one-letter code: Max-interacting protein 1 (243 aa).

Positions 76 to 128 (HYRSTHNELEKNRRAHLRLCLERLKTLIPLGPECSRHTTLGLLNKAKAHIKKL) constitute a bHLH domain. Residues 164–235 (EAERIRTDSM…TASDEGYSSC (72 aa)) are disordered. The segment covering 188-198 (DQEEMEVDVES) has biased composition (acidic residues). Residues 222–235 (SLQSTASDEGYSSC) show a composition bias toward polar residues.

As to quaternary structure, efficient DNA binding requires dimerization with another bHLH protein. Binds DNA as a heterodimer with MAX.

The protein resides in the nucleus. Transcriptional repressor. MXI1 binds with MAX to form a sequence-specific DNA-binding protein complex which recognizes the core sequence 5'-CAC[GA]TG-3'. MXI1 thus antagonizes MYC transcriptional activity by competing for MAX. This Danio rerio (Zebrafish) protein is Max-interacting protein 1 (mxi1).